Reading from the N-terminus, the 975-residue chain is Glycine dehydrogenase (decarboxylating) (975 aa).

K723 bears the N6-(pyridoxal phosphate)lysine mark.

This sequence belongs to the GcvP family. The glycine cleavage system is composed of four proteins: P, T, L and H. Pyridoxal 5'-phosphate serves as cofactor.

The enzyme catalyses N(6)-[(R)-lipoyl]-L-lysyl-[glycine-cleavage complex H protein] + glycine + H(+) = N(6)-[(R)-S(8)-aminomethyldihydrolipoyl]-L-lysyl-[glycine-cleavage complex H protein] + CO2. Its function is as follows. The glycine cleavage system catalyzes the degradation of glycine. The P protein binds the alpha-amino group of glycine through its pyridoxal phosphate cofactor; CO(2) is released and the remaining methylamine moiety is then transferred to the lipoamide cofactor of the H protein. The protein is Glycine dehydrogenase (decarboxylating) of Burkholderia lata (strain ATCC 17760 / DSM 23089 / LMG 22485 / NCIMB 9086 / R18194 / 383).